The sequence spans 357 residues: 3-dehydroquinate synthase (357 aa).

NAD(+) is bound by residues 99 to 103 (GATGD), 123 to 124 (TT), K135, K144, and 162 to 165 (FLET). Zn(2+) contacts are provided by E177, H247, and H261.

It belongs to the sugar phosphate cyclases superfamily. Dehydroquinate synthase family. The cofactor is Co(2+). Requires Zn(2+) as cofactor. It depends on NAD(+) as a cofactor.

The protein localises to the cytoplasm. It carries out the reaction 7-phospho-2-dehydro-3-deoxy-D-arabino-heptonate = 3-dehydroquinate + phosphate. The protein operates within metabolic intermediate biosynthesis; chorismate biosynthesis; chorismate from D-erythrose 4-phosphate and phosphoenolpyruvate: step 2/7. Functionally, catalyzes the conversion of 3-deoxy-D-arabino-heptulosonate 7-phosphate (DAHP) to dehydroquinate (DHQ). This Macrococcus caseolyticus (strain JCSC5402) (Macrococcoides caseolyticum) protein is 3-dehydroquinate synthase.